Consider the following 100-residue polypeptide: MQRRTQELIWKELVDNSHKLFCNCMDPQNHYRLICQNLNREPGEPWRTAGGIGEGGAGGDGAAAGGEGDVHGRPAGAEDGEDGADAAMAAALAAFEDATG.

Residues P42–A84 are disordered. The span at G50–E67 shows a compositional bias: gly residues.

This is an uncharacterized protein from Torque teno tamarin virus (isolate So-TTV2).